We begin with the raw amino-acid sequence, 166 residues long: Interferon gamma (166 aa).

The N-terminal stretch at 1–23 (MNYTSFILAFQLCAILGSSTYYC) is a signal peptide. A Pyrrolidone carboxylic acid modification is found at Q24. N-linked (GlcNAc...) asparagine glycans are attached at residues N39 and N106. The interval 147–166 (ANLRKRKRSQNPFRGRRALQ) is disordered. Over residues 148-166 (NLRKRKRSQNPFRGRRALQ) the composition is skewed to basic residues.

Belongs to the type II (or gamma) interferon family. Homodimer. Interacts with IFNGR1 (via extracellular domain); this interaction promotes IFNGR1 dimerization. Released primarily from activated T lymphocytes.

It is found in the secreted. Its function is as follows. Type II interferon produced by immune cells such as T-cells and NK cells that plays crucial roles in antimicrobial, antiviral, and antitumor responses by activating effector immune cells and enhancing antigen presentation. Primarily signals through the JAK-STAT pathway after interaction with its receptor IFNGR1 to affect gene regulation. Upon IFNG binding, IFNGR1 intracellular domain opens out to allow association of downstream signaling components JAK2, JAK1 and STAT1, leading to STAT1 activation, nuclear translocation and transcription of IFNG-regulated genes. Many of the induced genes are transcription factors such as IRF1 that are able to further drive regulation of a next wave of transcription. Plays a role in class I antigen presentation pathway by inducing a replacement of catalytic proteasome subunits with immunoproteasome subunits. In turn, increases the quantity, quality, and repertoire of peptides for class I MHC loading. Increases the efficiency of peptide generation also by inducing the expression of activator PA28 that associates with the proteasome and alters its proteolytic cleavage preference. Up-regulates as well MHC II complexes on the cell surface by promoting expression of several key molecules such as cathepsins B/CTSB, H/CTSH, and L/CTSL. Participates in the regulation of hematopoietic stem cells during development and under homeostatic conditions by affecting their development, quiescence, and differentiation. The chain is Interferon gamma (IFNG) from Equus asinus (Donkey).